A 265-amino-acid chain; its full sequence is Putative N(omega)-hydroxy-L-arginine synthase DcsA (265 aa).

It belongs to the DcsA family. The cofactor is heme.

Involved in the biosynthesis of the antibiotic D-cycloserine (DCS), a cyclic structural analog of D-alanine, used as an antitubercular agent. Could catalyze the production of N(omega)-hydroxy-L-arginine (NHA) from L-arginine. The polypeptide is Putative N(omega)-hydroxy-L-arginine synthase DcsA (Streptomyces lavendulae).